The sequence spans 697 residues: Methionine--tRNA ligase (697 aa).

Residues 12–22 (PYANGHFHIGH) carry the 'HIGH' region motif. Zn(2+) contacts are provided by Cys143, Cys146, Cys156, and Cys159. Positions 342–346 (KMSKS) match the 'KMSKS' region motif. ATP is bound at residue Lys345. The interval 557–577 (FEPPAEPSPQTSPAAAGAGAV) is disordered. The tRNA-binding domain maps to 591–697 (DFTKIDLRLA…PGAVPGLRVR (107 aa)).

It belongs to the class-I aminoacyl-tRNA synthetase family. MetG type 1 subfamily. In terms of assembly, homodimer. Zn(2+) serves as cofactor.

The protein resides in the cytoplasm. The enzyme catalyses tRNA(Met) + L-methionine + ATP = L-methionyl-tRNA(Met) + AMP + diphosphate. Its function is as follows. Is required not only for elongation of protein synthesis but also for the initiation of all mRNA translation through initiator tRNA(fMet) aminoacylation. This is Methionine--tRNA ligase from Methylibium petroleiphilum (strain ATCC BAA-1232 / LMG 22953 / PM1).